The following is a 389-amino-acid chain: Nicotinate phosphoribosyltransferase (389 aa).

Phosphohistidine; by autocatalysis is present on His-216.

Belongs to the NAPRTase family. Post-translationally, transiently phosphorylated on a His residue during the reaction cycle. Phosphorylation strongly increases the affinity for substrates and increases the rate of nicotinate D-ribonucleotide production. Dephosphorylation regenerates the low-affinity form of the enzyme, leading to product release.

It catalyses the reaction nicotinate + 5-phospho-alpha-D-ribose 1-diphosphate + ATP + H2O = nicotinate beta-D-ribonucleotide + ADP + phosphate + diphosphate. It participates in cofactor biosynthesis; NAD(+) biosynthesis; nicotinate D-ribonucleotide from nicotinate: step 1/1. Catalyzes the synthesis of beta-nicotinate D-ribonucleotide from nicotinate and 5-phospho-D-ribose 1-phosphate at the expense of ATP. The polypeptide is Nicotinate phosphoribosyltransferase (Ralstonia pickettii (strain 12J)).